Reading from the N-terminus, the 118-residue chain is MNPEEIRQRRLQEMQAKAQEQGAEDPEAQRQAQEQQMQYEMQKQKILRQILSEDARSRLARIKLAKPQFAEHVEMQLIQLAQAGKLPVPLTDEYFKGLLDRIYEMNRPAKKEITIMRK.

Over residues 1–12 the composition is skewed to basic and acidic residues; the sequence is MNPEEIRQRRLQ. Residues 1-35 form a disordered region; the sequence is MNPEEIRQRRLQEMQAKAQEQGAEDPEAQRQAQEQ.

This sequence belongs to the PDCD5 family.

In Methanococcus maripaludis (strain C5 / ATCC BAA-1333), this protein is DNA-binding protein MmarC5_1518.